A 103-amino-acid chain; its full sequence is uncharacterized protein (103 aa).

Residues 69–103 (SSISYPGGGGGGGGSAKSLSSSKPGGGGGSPLIFL) form a disordered region. 2 stretches are compositionally biased toward gly residues: residues 74–83 (PGGGGGGGGS) and 92–103 (PGGGGGSPLIFL).

This is an uncharacterized protein from Saccharomyces cerevisiae (strain ATCC 204508 / S288c) (Baker's yeast).